The primary structure comprises 369 residues: Chaperone protein DnaJ (369 aa).

In terms of domain architecture, J spans 7 to 73 (DYYEILGVPR…QKRAMYDRFG (67 aa)). The CR-type zinc finger occupies 143–225 (GAEIPVEYER…CGGSGRVLRK (83 aa)). Residues Cys156, Cys159, Cys173, Cys176, Cys199, Cys202, Cys213, and Cys216 each contribute to the Zn(2+) site. CXXCXGXG motif repeat units follow at residues 156–163 (CPRCGGTG), 173–180 (CPSCGGTG), 199–206 (CERCGGTG), and 213–220 (CHECGGSG).

This sequence belongs to the DnaJ family. In terms of assembly, homodimer. The cofactor is Zn(2+).

Its subcellular location is the cytoplasm. In terms of biological role, participates actively in the response to hyperosmotic and heat shock by preventing the aggregation of stress-denatured proteins and by disaggregating proteins, also in an autonomous, DnaK-independent fashion. Unfolded proteins bind initially to DnaJ; upon interaction with the DnaJ-bound protein, DnaK hydrolyzes its bound ATP, resulting in the formation of a stable complex. GrpE releases ADP from DnaK; ATP binding to DnaK triggers the release of the substrate protein, thus completing the reaction cycle. Several rounds of ATP-dependent interactions between DnaJ, DnaK and GrpE are required for fully efficient folding. Also involved, together with DnaK and GrpE, in the DNA replication of plasmids through activation of initiation proteins. This is Chaperone protein DnaJ from Thermotoga sp. (strain RQ2).